We begin with the raw amino-acid sequence, 283 residues long: MKQPFSRLFGFGDKQDQEMETGKQEEVHQLPIKEIVPNRFQPRTIFDDERIEELAQTIRTHGIIQPIVVRQREGKYEIIAGERRFRAVTLLGWETIPAIIKEFNDSQTASVALIENLQREGLTAVEEAVAYQKLIELHGLTQESLAQRLGKGQSTIANKLRLLHLSEPVQQAIMERKISERHARALLSLKDDALETKLLEEIVEQHLNVKQTEERVKELLEDAPASKPKKKPTRKAYSKDMRIAMNTIRQSVDMVMKSGLKVDTAEEEHEDFYQFTIRIPKKK.

The disordered stretch occupies residues methionine 1–glutamate 26. Over residues aspartate 13–glutamate 26 the composition is skewed to basic and acidic residues. The H-T-H motif DNA-binding region spans glutamate 143–leucine 162.

Belongs to the ParB family.

The protein resides in the cytoplasm. It localises to the nucleoid. Functionally, effects nucleoid occlusion by binding relatively nonspecifically to DNA and preventing the assembly of the division machinery in the vicinity of the nucleoid, especially under conditions that disturb the cell cycle. It helps to coordinate cell division and chromosome segregation by preventing the formation of the Z ring through the nucleoid, which would cause chromosome breakage. This Halalkalibacterium halodurans (strain ATCC BAA-125 / DSM 18197 / FERM 7344 / JCM 9153 / C-125) (Bacillus halodurans) protein is Nucleoid occlusion protein.